Reading from the N-terminus, the 689-residue chain is Glycine--tRNA ligase beta subunit (689 aa).

Belongs to the class-II aminoacyl-tRNA synthetase family. In terms of assembly, tetramer of two alpha and two beta subunits.

The protein localises to the cytoplasm. It catalyses the reaction tRNA(Gly) + glycine + ATP = glycyl-tRNA(Gly) + AMP + diphosphate. This chain is Glycine--tRNA ligase beta subunit, found in Shigella dysenteriae serotype 1 (strain Sd197).